Here is a 179-residue protein sequence, read N- to C-terminus: Large ribosomal subunit protein uL5 (179 aa).

It belongs to the universal ribosomal protein uL5 family. As to quaternary structure, part of the 50S ribosomal subunit; part of the 5S rRNA/L5/L18/L25 subcomplex. Contacts the 5S rRNA and the P site tRNA. Forms a bridge to the 30S subunit in the 70S ribosome.

Its function is as follows. This is one of the proteins that bind and probably mediate the attachment of the 5S RNA into the large ribosomal subunit, where it forms part of the central protuberance. In the 70S ribosome it contacts protein S13 of the 30S subunit (bridge B1b), connecting the 2 subunits; this bridge is implicated in subunit movement. Contacts the P site tRNA; the 5S rRNA and some of its associated proteins might help stabilize positioning of ribosome-bound tRNAs. This is Large ribosomal subunit protein uL5 from Erwinia tasmaniensis (strain DSM 17950 / CFBP 7177 / CIP 109463 / NCPPB 4357 / Et1/99).